A 164-amino-acid chain; its full sequence is Interferon gamma (164 aa).

A signal peptide spans 1–19; it reads MTCQTYCLFVLSVIMIYFG. Asn-42, Asn-61, and Asn-95 each carry an N-linked (GlcNAc...) asparagine glycan.

It belongs to the type II (or gamma) interferon family. As to quaternary structure, homodimer.

It localises to the secreted. Produced by lymphocytes activated by specific antigens or mitogens. IFN-gamma, in addition to having antiviral activity, has important immunoregulatory functions. It is a potent activator of macrophages, it has antiproliferative effects on transformed cells and it can potentiate the antiviral and antitumor effects of the type I interferons. This is Interferon gamma (IFNG) from Anas platyrhynchos (Mallard).